Consider the following 281-residue polypeptide: Hepatitis A virus cellular receptor 2 homolog (281 aa).

An N-terminal signal peptide occupies residues 1-19 (MFSGLTLNCVLLLLQLLLA). The region spanning 20–125 (RSLENAYVFE…PGLMNDKKLE (106 aa)) is the Ig-like V-type domain. Topologically, residues 20–193 (RSLENAYVFE…KDSGETIRTA (174 aa)) are extracellular. 3 disulfide bridges follow: C38–C111, C52–C63, and C58–C110. A 1,2-diacyl-sn-glycero-3-phospho-L-serine is bound by residues S61 and Q62. N-linked (GlcNAc...) asparagine glycans are attached at residues N74 and N100. Position 112 (R112) interacts with a 1,2-diacyl-sn-glycero-3-phospho-L-serine. Ca(2+) is bound by residues F115 and G117. A 1,2-diacyl-sn-glycero-3-phospho-L-serine is bound at residue M119. N120 lines the Ca(2+) pocket. A disordered region spans residues 139–160 (QTAHGDSTTASPRTLTTERNGS). Residue T146 is glycosylated (O-linked (GalNAc...) threonine). The N-linked (GlcNAc...) asparagine glycan is linked to N172. The chain crosses the membrane as a helical span at residues 194-214 (IHIGVGVSAGLTLALIIGVLI). Topologically, residues 215-281 (LKWYSCKKKK…YCYVNSQQPS (67 aa)) are cytoplasmic. The interaction with BAG6 stretch occupies residues 252–270 (EENIYTIEENVYEVENSNE). At Y256 the chain carries Phosphotyrosine; by ITK.

The protein belongs to the immunoglobulin superfamily. TIM family. Interacts with HMGB1; impairs HMGB1 binding to B-DNA and likely HMGB1-mediated innate immune response. Interacts with BAG6. Interacts (phosphorylated) with PIK3R1 and PIK3R2. Interacts (not dependent on its phosphorylation status) with FYN. Interacts (in basal state T-cells) with VAV1; AKT1/2, LCP2, ZAP70, SYK, PIK3R1, FYN, SH3BP2 and SH2D2A. Interacts (in activated T-cells) with LCK and PLCG. Interacts with ILF3; this interaction promotes ILF3 ubiquitination and degradation. In terms of processing, phosphorylated on tyrosine residues; modestly increased after TCR/CD28 stimulation. Can be phosphorylated in the cytoplasmic domain by FYN. Phosphorylation at Tyr-256 is increased by stimulation with ligand LGALS9. Post-translationally, N-glycosylated. In terms of tissue distribution, expressed in T-helper type 1 lymphocytes. Not expressed by naive T-cells but up-regulated as they differentiate into T-helper-1 cells. Also expressed by differentiated type 1 CD8+ cytotoxic T-cells. Expressed on peritoneal exudate macrophages, monocytes, and splenic dendritic cells (DCs). Expression on natural killer (NK) cells is inversely associated with IFN-gamma production during the initial 24 hours of LPS-induced endotoxic shock. Expressed on mast cells.

Its subcellular location is the membrane. It is found in the cell junction. It localises to the secreted. In terms of biological role, cell surface receptor implicated in modulating innate and adaptive immune responses. Generally accepted to have an inhibiting function. Reports on stimulating functions suggest that the activity may be influenced by the cellular context and/or the respective ligand. Regulates macrophage activation. Inhibits T-helper type 1 lymphocyte (Th1)-mediated auto- and alloimmune responses and promotes immunological tolerance. In CD8+ cells attenuates TCR-induced signaling, specifically by blocking NF-kappaB and NFAT promoter activities resulting in the loss of IL-2 secretion. The function may implicate its association with LCK proposed to impair phosphorylation of TCR subunits. In contrast, shown to activate TCR-induced signaling in T-cells probably implicating ZAP70, LCP2, LCK and FYN. Expressed on Treg cells can inhibit Th17 cell responses. Receptor for LGALS9. Binding to LGALS9 is believed to result in suppression of T-cell responses; the resulting apoptosis of antigen-specific cells may implicate HAVCR2 phosphorylation and disruption of its association with BAG6. Binding to LGALS9 is proposed to be involved in innate immune response to intracellular pathogens. Expressed on Th1 cells interacts with LGALS9 expressed on Mycobacterium tuberculosis-infected macrophages to stimulate antibactericidal activity including IL-1 beta secretion and to restrict intracellular bacterial growth. However, the function as receptor for LGALS9 has been challenged. Also reported to enhance CD8+ T-cell responses to an acute infection such as by Listeria monocytogenes. Receptor for phosphatidylserine (PtSer); PtSer-binding is calcium-dependent. May recognize PtSer on apoptotic cells leading to their phagocytosis. Mediates the engulfment of apoptotic cells by dendritic cells. Expressed on T-cells, promotes conjugation but not engulfment of apoptotic cells. Expressed on dendritic cells (DCs) positively regulates innate immune response and in synergy with Toll-like receptors promotes secretion of TNF-alpha. In tumor-imfiltrating DCs suppresses nucleic acid-mediated innate immune repsonse by interaction with HMGB1 and interfering with nucleic acid-sensing and trafficking of nucleid acids to endosomes. Can enhance mast cell production of Th2 cytokines Il-4, IL-6 and IL-13. Expressed on natural killer (NK) cells acts as a coreceptor to enhance IFN-gamma production in response to LGALS9. In contrast, shown to suppress NK cell-mediated cytotoxicity. Negatively regulates NK cell function in LPS-induced endotoxic shock. The sequence is that of Hepatitis A virus cellular receptor 2 homolog (Havcr2) from Mus musculus (Mouse).